The primary structure comprises 228 residues: PKHD-type hydroxylase Rmet_0838 (228 aa).

The Fe2OG dioxygenase domain occupies 78 to 179 (RVLPPMFNRY…RWASFFWAQS (102 aa)). The Fe cation site is built by His-96, Asp-98, and His-160. Arg-170 contributes to the 2-oxoglutarate binding site.

Fe(2+) is required as a cofactor. The cofactor is L-ascorbate.

This chain is PKHD-type hydroxylase Rmet_0838, found in Cupriavidus metallidurans (strain ATCC 43123 / DSM 2839 / NBRC 102507 / CH34) (Ralstonia metallidurans).